The sequence spans 336 residues: tRNA N6-adenosine threonylcarbamoyltransferase (336 aa).

Fe cation is bound by residues His112 and His116. Substrate contacts are provided by residues 136–140 (LVSGG), Asp169, Gly182, and Asn276. Asp304 provides a ligand contact to Fe cation.

It belongs to the KAE1 / TsaD family. Requires Fe(2+) as cofactor.

The protein localises to the cytoplasm. It carries out the reaction L-threonylcarbamoyladenylate + adenosine(37) in tRNA = N(6)-L-threonylcarbamoyladenosine(37) in tRNA + AMP + H(+). Functionally, required for the formation of a threonylcarbamoyl group on adenosine at position 37 (t(6)A37) in tRNAs that read codons beginning with adenine. Is involved in the transfer of the threonylcarbamoyl moiety of threonylcarbamoyl-AMP (TC-AMP) to the N6 group of A37, together with TsaE and TsaB. TsaD likely plays a direct catalytic role in this reaction. The sequence is that of tRNA N6-adenosine threonylcarbamoyltransferase from Francisella philomiragia subsp. philomiragia (strain ATCC 25017 / CCUG 19701 / FSC 153 / O#319-036).